We begin with the raw amino-acid sequence, 452 residues long: Ribosomal L1 domain-containing protein 1 (452 aa).

Met-1 bears the N-acetylmethionine mark. Residues Lys-119 and Lys-253 each participate in a glycyl lysine isopeptide (Lys-Gly) (interchain with G-Cter in SUMO2) cross-link. The stretch at 277–350 forms a coiled coil; the sequence is LRSLRKQELK…QKVTEECEEA (74 aa). Residues 283 to 452 are disordered; the sequence is QELKKRKREN…DKKTKAAHSN (170 aa). Residues 292 to 301 show a composition bias toward basic and acidic residues; that stretch reads NAKLKKESKM. The segment covering 309–319 has biased composition (polar residues); the sequence is ATSLLTQSGLA. Residues 330-341 are compositionally biased toward basic residues; sequence QKKKTNKAHKKQ. Phosphothreonine is present on residues Thr-334, Thr-344, Thr-360, Thr-399, and Thr-407. Basic and acidic residues predominate over residues 414 to 423; it reads KDVQEFRKPE. The span at 425–440 shows a compositional bias: polar residues; the sequence is SSFSTPRKSGKKASNT. Thr-429 carries the phosphothreonine modification. Residue Lys-432 is modified to N6-acetyllysine. Ser-433 is modified (phosphoserine).

Belongs to the universal ribosomal protein uL1 family. Highly divergent. In terms of assembly, interacts with ING1. Interacts with KPNA7 and KPNA2.

It localises to the nucleus. Its subcellular location is the nucleolus. Regulates cellular senescence through inhibition of PTEN translation. Acts as a pro-apoptotic regulator in response to DNA damage. The protein is Ribosomal L1 domain-containing protein 1 of Mus musculus (Mouse).